The chain runs to 450 residues: UDP-N-acetylmuramoylalanine--D-glutamate ligase (450 aa).

119-125 (GSNGKTT) contacts ATP.

Belongs to the MurCDEF family.

It is found in the cytoplasm. The enzyme catalyses UDP-N-acetyl-alpha-D-muramoyl-L-alanine + D-glutamate + ATP = UDP-N-acetyl-alpha-D-muramoyl-L-alanyl-D-glutamate + ADP + phosphate + H(+). The protein operates within cell wall biogenesis; peptidoglycan biosynthesis. Its function is as follows. Cell wall formation. Catalyzes the addition of glutamate to the nucleotide precursor UDP-N-acetylmuramoyl-L-alanine (UMA). The protein is UDP-N-acetylmuramoylalanine--D-glutamate ligase of Streptococcus thermophilus (strain CNRZ 1066).